Here is a 558-residue protein sequence, read N- to C-terminus: Formate--tetrahydrofolate ligase (558 aa).

66-73 (TPAGEGKT) contacts ATP.

The protein belongs to the formate--tetrahydrofolate ligase family.

It carries out the reaction (6S)-5,6,7,8-tetrahydrofolate + formate + ATP = (6R)-10-formyltetrahydrofolate + ADP + phosphate. Its pathway is one-carbon metabolism; tetrahydrofolate interconversion. The sequence is that of Formate--tetrahydrofolate ligase from Neisseria meningitidis serogroup C (strain 053442).